The sequence spans 503 residues: Aspartyl/glutamyl-tRNA(Asn/Gln) amidotransferase subunit B (503 aa).

It belongs to the GatB/GatE family. GatB subfamily. Heterotrimer of A, B and C subunits.

It carries out the reaction L-glutamyl-tRNA(Gln) + L-glutamine + ATP + H2O = L-glutaminyl-tRNA(Gln) + L-glutamate + ADP + phosphate + H(+). It catalyses the reaction L-aspartyl-tRNA(Asn) + L-glutamine + ATP + H2O = L-asparaginyl-tRNA(Asn) + L-glutamate + ADP + phosphate + 2 H(+). Its function is as follows. Allows the formation of correctly charged Asn-tRNA(Asn) or Gln-tRNA(Gln) through the transamidation of misacylated Asp-tRNA(Asn) or Glu-tRNA(Gln) in organisms which lack either or both of asparaginyl-tRNA or glutaminyl-tRNA synthetases. The reaction takes place in the presence of glutamine and ATP through an activated phospho-Asp-tRNA(Asn) or phospho-Glu-tRNA(Gln). The chain is Aspartyl/glutamyl-tRNA(Asn/Gln) amidotransferase subunit B from Mycolicibacterium smegmatis (strain ATCC 700084 / mc(2)155) (Mycobacterium smegmatis).